The chain runs to 291 residues: Probable cell wall amidase LytH (291 aa).

The N-terminal stretch at 1–40 (MKKIDSWLTKHGLKNRLTLVVIVIFIIFLILLFMFVNLSD) is a signal peptide. An SH3b domain is found at 41–105 (EDTGQITITE…WVAGWHTNLN (65 aa)). In terms of domain architecture, MurNAc-LAA spans 122-286 (IVLDPGHGGS…VEQAIVDGLK (165 aa)). The segment at 123–147 (VLDPGHGGSDQGASSSTPSKSLEKN) is disordered. Polar residues predominate over residues 133-142 (QGASSSTPSK).

Belongs to the N-acetylmuramoyl-L-alanine amidase 3 family.

It localises to the secreted. Its function is as follows. Probably involved in cell-wall metabolism. In Staphylococcus epidermidis (strain ATCC 12228 / FDA PCI 1200), this protein is Probable cell wall amidase LytH (lytH).